A 635-amino-acid polypeptide reads, in one-letter code: Cationic amino acid transporter 4 (635 aa).

The next 3 membrane-spanning stretches (helical) occupy residues 42 to 62 (LTLL…TGTV), 66 to 86 (MAGP…LLAA), and 113 to 133 (IWAF…GAAV). 3 N-linked (GlcNAc...) asparagine glycosylation sites follow: asparagine 146, asparagine 151, and asparagine 195. A helical transmembrane segment spans residues 197-217 (TFSAISLIVILFIIVLGFILA). N-linked (GlcNAc...) asparagine glycosylation is present at asparagine 221. 5 helical membrane passes run 229–249 (FAPF…YAFV), 270–290 (MAIA…STVL), 318–338 (GFIV…SNLF), 365–385 (QVPV…ALLL), and 391–411 (VQFL…SIIV). Phosphoserine is present on residues serine 422 and serine 427. Helical transmembrane passes span 478-498 (VAWA…VLVF), 508-528 (WGYV…LLVL), 539-559 (TFQI…NTCL), and 567-587 (TWLR…GYGI).

The protein belongs to the amino acid-polyamine-organocation (APC) superfamily. Cationic amino acid transporter (CAT) (TC 2.A.3.3) family.

The protein resides in the membrane. Its function is as follows. Involved in the transport of the cationic amino acids (arginine, lysine and ornithine). In Mus musculus (Mouse), this protein is Cationic amino acid transporter 4 (Slc7a4).